We begin with the raw amino-acid sequence, 382 residues long: GTPase Obg (382 aa).

An Obg domain is found at 2-161; sequence VKFADESKIR…REIIVELNII (160 aa). The OBG-type G domain maps to 162–328; the sequence is ADIGLVGFPN…VKKAFIRLAD (167 aa). Residues 168 to 175, 193 to 197, 215 to 218, 282 to 285, and 309 to 311 each bind GTP; these read GFPNAGKS, FTTKI, DIPG, TKLD, and SLY. The Mg(2+) site is built by Ser-175 and Thr-195. A disordered region spans residues 360–382; sequence EEKNDDEHFGATVSLSRKRKPKK.

It belongs to the TRAFAC class OBG-HflX-like GTPase superfamily. OBG GTPase family. As to quaternary structure, monomer. It depends on Mg(2+) as a cofactor.

It localises to the cytoplasm. An essential GTPase which binds GTP, GDP and possibly (p)ppGpp with moderate affinity, with high nucleotide exchange rates and a fairly low GTP hydrolysis rate. Plays a role in control of the cell cycle, stress response, ribosome biogenesis and in those bacteria that undergo differentiation, in morphogenesis control. The protein is GTPase Obg of Treponema denticola (strain ATCC 35405 / DSM 14222 / CIP 103919 / JCM 8153 / KCTC 15104).